Consider the following 215-residue polypeptide: Ras-related protein Rab-14 (215 aa).

A2 carries the post-translational modification N-acetylalanine. The GTP site is built by G21, V22, G23, K24, S25, C26, A38, D39, C40, H42, and T43. S25 contacts Mg(2+). Residues 42–47 (HTIGVE) carry the Switch 1 motif. 2 residues coordinate Mg(2+): T43 and D66. The short motif at 68–77 (AGQERFRAVT) is the Switch 2 element. Residues G69, N124, K125, D127, A155, and K156 each coordinate GTP. Positions 188-215 (SGVQHKPSAPQGGRLTSEPQPQREGCGC) are disordered. Residues C213 and C215 are each lipidated (S-geranylgeranyl cysteine). A Cysteine methyl ester modification is found at C215.

The protein belongs to the small GTPase superfamily. Rab family. The cofactor is Mg(2+).

The protein resides in the recycling endosome. It is found in the early endosome membrane. The protein localises to the golgi apparatus membrane. It localises to the golgi apparatus. Its subcellular location is the trans-Golgi network membrane. The protein resides in the cytoplasmic vesicle. It is found in the phagosome. It carries out the reaction GTP + H2O = GDP + phosphate + H(+). Regulated by guanine nucleotide exchange factors (GEFs) including DENND6A and DENND6B which promote the exchange of bound GDP for free GTP. Regulated by GTPase activating proteins (GAPs) which increase the GTP hydrolysis activity. Inhibited by GDP dissociation inhibitors (GDIs) which prevent Rab-GDP dissociation. In terms of biological role, the small GTPases Rab are key regulators of intracellular membrane trafficking, from the formation of transport vesicles to their fusion with membranes. Rabs cycle between an inactive GDP-bound form and an active GTP-bound form that is able to recruit to membranes different set of downstream effectors directly responsible for vesicle formation, movement, tethering and fusion. Involved in membrane trafficking between the Golgi complex and endosomes during early embryonic development. Regulates the Golgi to endosome transport of FGFR-containing vesicles during early development, a key process for developing basement membrane and epiblast and primitive endoderm lineages during early postimplantation development. May act by modulating the kinesin KIF16B-cargo association to endosomes. Regulates, together with its guanine nucleotide exchange factor DENND6A, the specific endocytic transport of ADAM10, N-cadherin/CDH2 shedding and cell-cell adhesion. Mediates endosomal tethering and fusion through the interaction with RUFY1 and RAB4B. Interaction with RAB11FIP1 may function in the process of neurite formation. The chain is Ras-related protein Rab-14 (RAB14) from Gallus gallus (Chicken).